A 399-amino-acid polypeptide reads, in one-letter code: CCA-adding enzyme (399 aa).

G33 and R36 together coordinate ATP. 2 residues coordinate CTP: G33 and R36. Residues D46 and D48 each coordinate Mg(2+). The ATP site is built by R117, D160, R163, R166, and R169. CTP is bound by residues R117, D160, R163, R166, and R169.

Belongs to the tRNA nucleotidyltransferase/poly(A) polymerase family. Bacterial CCA-adding enzyme type 3 subfamily. Homodimer. It depends on Mg(2+) as a cofactor.

It carries out the reaction a tRNA precursor + 2 CTP + ATP = a tRNA with a 3' CCA end + 3 diphosphate. The catalysed reaction is a tRNA with a 3' CCA end + 2 CTP + ATP = a tRNA with a 3' CCACCA end + 3 diphosphate. Its function is as follows. Catalyzes the addition and repair of the essential 3'-terminal CCA sequence in tRNAs without using a nucleic acid template. Adds these three nucleotides in the order of C, C, and A to the tRNA nucleotide-73, using CTP and ATP as substrates and producing inorganic pyrophosphate. tRNA 3'-terminal CCA addition is required both for tRNA processing and repair. Also involved in tRNA surveillance by mediating tandem CCA addition to generate a CCACCA at the 3' terminus of unstable tRNAs. While stable tRNAs receive only 3'-terminal CCA, unstable tRNAs are marked with CCACCA and rapidly degraded. The chain is CCA-adding enzyme from Lactobacillus helveticus (strain DPC 4571).